The chain runs to 565 residues: NAD-dependent malic enzyme (565 aa).

The Proton donor role is filled by Y104. R157 contacts NAD(+). Residue K175 is the Proton acceptor of the active site. Residues E246, D247, and D270 each contribute to the a divalent metal cation site. NAD(+) is bound by residues D270 and N418.

This sequence belongs to the malic enzymes family. As to quaternary structure, homotetramer. The cofactor is Mg(2+). It depends on Mn(2+) as a cofactor.

It catalyses the reaction (S)-malate + NAD(+) = pyruvate + CO2 + NADH. It carries out the reaction oxaloacetate + H(+) = pyruvate + CO2. In Escherichia coli O139:H28 (strain E24377A / ETEC), this protein is NAD-dependent malic enzyme.